Consider the following 275-residue polypeptide: 4-hydroxy-3-methylbut-2-enyl diphosphate reductase (275 aa).

C12 is a [4Fe-4S] cluster binding site. Residues H36 and H70 each coordinate (2E)-4-hydroxy-3-methylbut-2-enyl diphosphate. Dimethylallyl diphosphate is bound by residues H36 and H70. Isopentenyl diphosphate-binding residues include H36 and H70. Residue C92 coordinates [4Fe-4S] cluster. H120 contributes to the (2E)-4-hydroxy-3-methylbut-2-enyl diphosphate binding site. Position 120 (H120) interacts with dimethylallyl diphosphate. H120 is a binding site for isopentenyl diphosphate. The Proton donor role is filled by E122. T158 serves as a coordination point for (2E)-4-hydroxy-3-methylbut-2-enyl diphosphate. C186 serves as a coordination point for [4Fe-4S] cluster. (2E)-4-hydroxy-3-methylbut-2-enyl diphosphate-binding residues include S214, S215, N216, and S258. Dimethylallyl diphosphate-binding residues include S214, S215, N216, and S258. 4 residues coordinate isopentenyl diphosphate: S214, S215, N216, and S258.

Belongs to the IspH family. [4Fe-4S] cluster is required as a cofactor.

It carries out the reaction isopentenyl diphosphate + 2 oxidized [2Fe-2S]-[ferredoxin] + H2O = (2E)-4-hydroxy-3-methylbut-2-enyl diphosphate + 2 reduced [2Fe-2S]-[ferredoxin] + 2 H(+). The enzyme catalyses dimethylallyl diphosphate + 2 oxidized [2Fe-2S]-[ferredoxin] + H2O = (2E)-4-hydroxy-3-methylbut-2-enyl diphosphate + 2 reduced [2Fe-2S]-[ferredoxin] + 2 H(+). The protein operates within isoprenoid biosynthesis; dimethylallyl diphosphate biosynthesis; dimethylallyl diphosphate from (2E)-4-hydroxy-3-methylbutenyl diphosphate: step 1/1. It functions in the pathway isoprenoid biosynthesis; isopentenyl diphosphate biosynthesis via DXP pathway; isopentenyl diphosphate from 1-deoxy-D-xylulose 5-phosphate: step 6/6. Its function is as follows. Catalyzes the conversion of 1-hydroxy-2-methyl-2-(E)-butenyl 4-diphosphate (HMBPP) into a mixture of isopentenyl diphosphate (IPP) and dimethylallyl diphosphate (DMAPP). Acts in the terminal step of the DOXP/MEP pathway for isoprenoid precursor biosynthesis. The sequence is that of 4-hydroxy-3-methylbut-2-enyl diphosphate reductase from Campylobacter hominis (strain ATCC BAA-381 / DSM 21671 / CCUG 45161 / LMG 19568 / NCTC 13146 / CH001A).